The sequence spans 464 residues: Cysteine--tRNA ligase (464 aa).

Cys-28 lines the Zn(2+) pocket. Residues 30-40 (VTVYDFCHIGH) carry the 'HIGH' region motif. Positions 209, 234, and 238 each coordinate Zn(2+). Positions 266–270 (KMSKS) match the 'KMSKS' region motif. Lys-269 serves as a coordination point for ATP.

This sequence belongs to the class-I aminoacyl-tRNA synthetase family. Monomer. Requires Zn(2+) as cofactor.

The protein resides in the cytoplasm. It catalyses the reaction tRNA(Cys) + L-cysteine + ATP = L-cysteinyl-tRNA(Cys) + AMP + diphosphate. The polypeptide is Cysteine--tRNA ligase (cysS) (Buchnera aphidicola subsp. Acyrthosiphon pisum (strain APS) (Acyrthosiphon pisum symbiotic bacterium)).